The following is a 537-amino-acid chain: Apoptosis inhibitor 5-like protein API5 (537 aa).

Positions 9-363 (AEVERLYELG…TTNSLCGYKI (355 aa)) are ARM-like and Heat-like helical repeats. A disordered region spans residues 465 to 537 (WMEQPKKPAP…GGRGRGWGYR (73 aa)). Over residues 474–492 (PTTTGGKRSQPATNGNTPA) the composition is skewed to polar residues.

This sequence belongs to the API5 family. Interacts with AIP1 and AIP2.

The protein resides in the nucleus. Putative anti-apoptotic factor involved in the regulation of tapetal programmed cell death (PCD) and degeneration during anther development. Interacts directly with the DEAD-box ATP-dependent RNA helicases AIP1 and AIP2 that form dimers and bind the promoter region of the cysteine protease CP1 involved in tapetum PCD. The sequence is that of Apoptosis inhibitor 5-like protein API5 from Oryza sativa subsp. japonica (Rice).